The following is a 1121-amino-acid chain: Linoleate 10R-lipoxygenase (1121 aa).

The interval 1-66 is disordered; it reads MLRRFSSTFK…NEKKGNSVSP (66 aa). The segment covering 22–36 has biased composition (low complexity); the sequence is TASSSSAAVANTNNN. Residues 50 to 61 are compositionally biased toward basic and acidic residues; the sequence is SSSDDDRNEKKG. Catalysis depends on His-253, which acts as the Proton acceptor. Ca(2+) is bound by residues Asp-254, Ser-269, Tyr-271, Asp-273, and Ser-275.

This sequence belongs to the peroxidase family.

The catalysed reaction is (9Z,12Z)-octadecadienoate + O2 = (8E,10R,12Z)-10-hydroperoxyoctadeca-8,12-dienoate. Responsible for the synthesis of various fatty acid-derived oxylipins. Oxidizes linoleic acid primarily to 10R-hydroperoxy-8,12-octadecadienoic acid (10R-HPODE) and, to a lesser extent, 8R-hydroperoxylinoleic acid (8R-HPODE). Also synthesizes 10-hydroxy-octadeca-8,12-dienoic acid (10-HODE) from linoleic acid and primarily 8R-hydroxy-octadeca-9-monoenoic acid (8-HOME, also known as psiB beta) from oleic acid. 8-HOME forms part of psi factor, a mixture of oxylipins that regulates the balance between sexual and asexual spore production. Displays epoxyalcohol synthase activity. Plays a role in the synthesis of prostaglandins which may be required for pathogenicity. This is Linoleate 10R-lipoxygenase from Aspergillus fumigatus (strain ATCC MYA-4609 / CBS 101355 / FGSC A1100 / Af293) (Neosartorya fumigata).